The following is a 388-amino-acid chain: Na(+)/H(+) antiporter NhaA (388 aa).

12 consecutive transmembrane segments (helical) span residues 14–34 (TIGI…NSPL), 59–79 (LLLW…GLEI), 95–115 (TFPA…FASL), 125–145 (GWAI…SLLG), 154–174 (VFLM…IALF), 177–197 (TKLS…LFIM), 200–220 (MCVI…VSVL), 222–242 (SGVH…YRIN), 257–277 (GLHL…NAGV), 295–315 (IMLG…YLAV), 328–348 (LIQF…SLFI), and 362–382 (ADKL…YIVL).

This sequence belongs to the NhaA Na(+)/H(+) (TC 2.A.33) antiporter family.

Its subcellular location is the cell inner membrane. It carries out the reaction Na(+)(in) + 2 H(+)(out) = Na(+)(out) + 2 H(+)(in). Na(+)/H(+) antiporter that extrudes sodium in exchange for external protons. In Nitratiruptor sp. (strain SB155-2), this protein is Na(+)/H(+) antiporter NhaA.